We begin with the raw amino-acid sequence, 212 residues long: Uridine kinase (212 aa).

Residue 13–20 (GGSGSGKT) coordinates ATP.

The protein belongs to the uridine kinase family.

The protein resides in the cytoplasm. It catalyses the reaction uridine + ATP = UMP + ADP + H(+). It carries out the reaction cytidine + ATP = CMP + ADP + H(+). It functions in the pathway pyrimidine metabolism; CTP biosynthesis via salvage pathway; CTP from cytidine: step 1/3. The protein operates within pyrimidine metabolism; UMP biosynthesis via salvage pathway; UMP from uridine: step 1/1. The chain is Uridine kinase from Bacillus cereus (strain ATCC 10987 / NRS 248).